A 223-amino-acid polypeptide reads, in one-letter code: MRVLVVEDNALLRHHLKVQIQDAGHQVDDAEDAKEADYYLNEHLPDIAIVDLGLPDEDGLSLICRWRSNDVSLPILVLTARESWQDKVEVLSAGADDYVTKPFHIEEVMARMQALMRRNSGLASQVISLPPFQVDLSRRELSINDEVIKLTAFEYTIMETLIRNNGKVVSKDSLMLQLYPDAELRESHTIDVLMGRLRKKIQAQYPQEVITTVRGQGYLFELR.

One can recognise a Response regulatory domain in the interval 2–116 (RVLVVEDNAL…EVMARMQALM (115 aa)). At D51 the chain carries 4-aspartylphosphate. The segment at residues 124–222 (SQVISLPPFQ…VRGQGYLFEL (99 aa)) is a DNA-binding region (ompR/PhoB-type).

Phosphorylated by PhoQ.

Its subcellular location is the cytoplasm. In terms of biological role, member of the two-component regulatory system PhoQ/PhoP involved in virulence, adaptation to low Mg(2+) environments and the control of acid resistance genes. The sequence is that of Transcriptional regulatory protein PhoP (phoP) from Escherichia coli O157:H7.